Consider the following 602-residue polypeptide: Alpha-glucosides permease MPH3 (602 aa).

Residues 1-106 (MKNLSFLINR…AAAWSLLVST (106 aa)) are Cytoplasmic-facing. The helical transmembrane segment at 107 to 127 (TLIMEGYDTAILGAFYALPIF) threads the bilayer. The Extracellular segment spans residues 128-142 (QRKFGSQNDKTGEWE). The helical transmembrane segment at 143–163 (ISASWQIGLTLCYMAGEIVGL) threads the bilayer. The Cytoplasmic segment spans residues 164 to 178 (QLTGPSVDLVGNRYT). Residues 179-199 (LIIALFFLAAFTFILYFCNSL) form a helical membrane-spanning segment. Position 200 (Gly200) is a topological domain, extracellular. Residues 201–221 (MIAVGQALCGMPWGCFQCLTV) traverse the membrane as a helical segment. Residues 222–234 (SYASEICPLALRY) are Cytoplasmic-facing. Residues 235 to 255 (YLTTYSNLCWLFGQLFAAGIM) traverse the membrane as a helical segment. At 256 to 270 (KNSQKKYADSELGYK) the chain is on the extracellular side. The helical transmembrane segment at 271-291 (LPFALQWILPVPLALGIFFAP) threads the bilayer. The Cytoplasmic segment spans residues 292 to 363 (ESPWWLVKKG…EDKINRRRTR (72 aa)). Residues 364–384 (ITCLCWAGQATCGSILIGYST) form a helical membrane-spanning segment. At 385–397 (YFYEKAGVSTEMS) the chain is on the extracellular side. The helical transmembrane segment at 398–418 (FTFSIIQYCLGICATFLSWWA) threads the bilayer. At 419 to 426 (SKYFGRYD) the chain is on the cytoplasmic side. A helical membrane pass occupies residues 427 to 447 (LYAFGLAFQTIVFFIIGGLGC). Residues 448-459 (SSTHGSKMGSGS) are Extracellular-facing. Residues 460-480 (LLMAVAFFYNLGIAPVVFCLV) traverse the membrane as a helical segment. At 481 to 492 (SEMPSSRLRTKT) the chain is on the cytoplasmic side. Residues 493 to 513 (IILARNTYNVVSIICSVLILY) form a helical membrane-spanning segment. Over 514–525 (QLNSKKWNWGAK) the chain is Extracellular. A helical membrane pass occupies residues 526–546 (SGFFWGVLCFCTLIWAVVDLP). Over 547 to 602 (ETAGKTFVEINELFKLGVSARKFKSTKVDPFVVKNPPKDVSHNDPKGDIEASIAEE) the chain is Cytoplasmic. Positions 580-602 (KNPPKDVSHNDPKGDIEASIAEE) are disordered. The span at 582 to 595 (PPKDVSHNDPKGDI) shows a compositional bias: basic and acidic residues.

This sequence belongs to the major facilitator superfamily. Sugar transporter (TC 2.A.1.1) family.

The protein resides in the cell membrane. In terms of biological role, high-affinity uptake of maltose and maltotriose. Also transports alpha-methylglucoside, glucose and turanose but not melezitose or trehalose. The sequence is that of Alpha-glucosides permease MPH3 (MPH3) from Saccharomyces cerevisiae (strain AWRI1631) (Baker's yeast).